The following is a 665-amino-acid chain: Protein kinase domain-containing protein ppk2 (665 aa).

4 disordered regions span residues 42 to 63, 82 to 152, 187 to 217, and 286 to 343; these read PNDS…KKKF, GNST…LSRS, LNSQ…SSMN, and AESL…VGHP. Over residues 82–104 the composition is skewed to polar residues; the sequence is GNSTRSPPFHLQNQKSNGQSEVW. Low complexity-rich tracts occupy residues 137 to 152 and 206 to 217; these read SLSR…LSRS and TNRLSSSTSSMN. A compositionally biased stretch (polar residues) spans 294–316; that stretch reads SATTIQQGDVSSYPLSRSVSTPV. At Ser358 the chain carries Phosphoserine. Residues 388-637 enclose the Protein kinase domain; the sequence is YTDFTKICQQ…NMLLETSSFL (250 aa). ATP contacts are provided by residues 394-402 and Lys417; that span reads ICQQDTVGT.

The protein resides in the cytoplasm. This chain is Protein kinase domain-containing protein ppk2 (ppk2), found in Schizosaccharomyces pombe (strain 972 / ATCC 24843) (Fission yeast).